Here is a 1184-residue protein sequence, read N- to C-terminus: Fibulin-2 (1184 aa).

The signal sequence occupies residues 1–27; it reads MVLLWEPAGAWLALGLALALGPSVAAA. A subdomain NA (Cys-rich) region spans residues 28–177; the sequence is APRQDCTGVE…ELICYQLPGC (150 aa). Residues 28 to 444 are n; the sequence is APRQDCTGVE…EGSTKDLIET (417 aa). The interval 178–444 is subdomain NB (Cys-free); the sequence is HGNFSDAEEG…EGSTKDLIET (267 aa). Asparagine 180 is a glycosylation site (N-linked (GlcNAc...) asparagine). Disordered stretches follow at residues 221-293 and 399-437; these read VQAG…MAVT and IPPT…PEGS. Gly residues predominate over residues 224-236; it reads GAGGPPAALGGGS. A compositionally biased stretch (low complexity) spans 252–261; sequence PRPTAAAALG. The segment covering 276 to 288 has biased composition (acidic residues); it reads DSEEEEEEEEERE. Serine 277 is subject to Phosphoserine. A compositionally biased stretch (polar residues) spans 423–436; the sequence is PNSVHSIPRSSPEG. 38 disulfides stabilise this stretch: cysteine 445–cysteine 472, cysteine 446–cysteine 479, cysteine 459–cysteine 480, cysteine 489–cysteine 518, cysteine 502–cysteine 519, cysteine 521–cysteine 545, cysteine 522–cysteine 552, cysteine 535–cysteine 553, cysteine 608–cysteine 620, cysteine 616–cysteine 629, cysteine 631–cysteine 644, cysteine 683–cysteine 693, cysteine 689–cysteine 702, cysteine 704–cysteine 717, cysteine 723–cysteine 736, cysteine 730–cysteine 745, cysteine 751–cysteine 762, cysteine 768–cysteine 781, cysteine 775–cysteine 790, cysteine 796–cysteine 808, cysteine 814–cysteine 827, cysteine 821–cysteine 836, cysteine 843–cysteine 856, cysteine 862–cysteine 875, cysteine 869–cysteine 884, cysteine 886–cysteine 899, cysteine 905–cysteine 917, cysteine 913–cysteine 926, cysteine 928–cysteine 941, cysteine 947–cysteine 956, cysteine 952–cysteine 965, cysteine 967–cysteine 980, cysteine 986–cysteine 998, cysteine 994–cysteine 1007, cysteine 1009–cysteine 1023, cysteine 1029–cysteine 1042, cysteine 1036–cysteine 1051, and cysteine 1056–cysteine 1068. Anaphylatoxin-like domains are found at residues 445–480, 488–519, and 521–553; these read CCAA…RHCC, SCMA…KQCC, and CCGL…LSCC. N-linked (GlcNAc...) asparagine glycosylation occurs at asparagine 507. One can recognise an EGF-like 1; calcium-binding domain in the interval 604 to 645; the sequence is DQDECLLLPGELCQHLCINTVGSYHCACFPGFSLQDDGRTCR. One can recognise an EGF-like 2 domain in the interval 679–718; that stretch reads QPNTCKDNGPCKQVCSTVGGSAICSCFPGYAIMADGVSCE. In terms of domain architecture, EGF-like 3; calcium-binding spans 719-763; it reads DINECVTDLHTCSRGEHCVNTLGSFHCYKALTCEPGYALKDGECE. An EGF-like 4; calcium-binding domain is found at 764–809; the sequence is DVDECAMGTHTCQPGFLCQNTKGSFYCQARQRCMDGFLQDPEGNCV. The EGF-like 5; calcium-binding domain maps to 810 to 857; it reads DINECTSLSEPCRPGFSCINTVGSYTCQRNPLICARGYHASDDGTKCV. Residues 858–900 form the EGF-like 6; calcium-binding domain; that stretch reads DVNECETGVHRCGEGQVCHNLPGSYRCDCKAGFQRDAFGRGCI. The region spanning 901–942 is the EGF-like 7; calcium-binding domain; sequence DVNECWASPGRLCQHTCENTLGSYRCSCASGFLLAADGKRCE. An EGF-like 8; calcium-binding domain is found at 943–981; the sequence is DVNECEAQRCSQECANIYGSYQCYCRQGYQLAEDGHTCT. One can recognise an EGF-like 9; calcium-binding domain in the interval 982–1024; it reads DIDECAQGAGILCTFRCLNVPGSYQCACPEQGYTMTANGRSCK. Positions 1025–1069 constitute an EGF-like 10; calcium-binding domain; sequence DVDECALGTHNCSEAETCHNIQGSFRCLRFECPPNYVQVSKTKCE. Asparagine 1035 carries N-linked (GlcNAc...) asparagine glycosylation. The domain III stretch occupies residues 1070-1184; it reads RTTCHDFLEC…MHIFFTTFAL (115 aa).

This sequence belongs to the fibulin family. As to quaternary structure, homotrimer; disulfide-linked. Interacts with LAMA2. Interacts with FBN1 (via N-terminal domain). Forms a ternary complex with ELN and FBN1. O-glycosylated with core 1 or possibly core 8 glycans. It is unsure if the O-glycosylation is on Thr-347 or Ser-348. Component of both basement membranes and other connective tissues. Expressed in heart, placenta and ovary.

Its subcellular location is the secreted. It is found in the extracellular space. It localises to the extracellular matrix. In terms of biological role, its binding to fibronectin and some other ligands is calcium dependent. May act as an adapter that mediates the interaction between FBN1 and ELN. This is Fibulin-2 (FBLN2) from Homo sapiens (Human).